Consider the following 183-residue polypeptide: ATP synthase subunit delta (183 aa).

This sequence belongs to the ATPase delta chain family. In terms of assembly, F-type ATPases have 2 components, F(1) - the catalytic core - and F(0) - the membrane proton channel. F(1) has five subunits: alpha(3), beta(3), gamma(1), delta(1), epsilon(1). F(0) has three main subunits: a(1), b(2) and c(10-14). The alpha and beta chains form an alternating ring which encloses part of the gamma chain. F(1) is attached to F(0) by a central stalk formed by the gamma and epsilon chains, while a peripheral stalk is formed by the delta and b chains.

It is found in the cell inner membrane. Its function is as follows. F(1)F(0) ATP synthase produces ATP from ADP in the presence of a proton or sodium gradient. F-type ATPases consist of two structural domains, F(1) containing the extramembraneous catalytic core and F(0) containing the membrane proton channel, linked together by a central stalk and a peripheral stalk. During catalysis, ATP synthesis in the catalytic domain of F(1) is coupled via a rotary mechanism of the central stalk subunits to proton translocation. Functionally, this protein is part of the stalk that links CF(0) to CF(1). It either transmits conformational changes from CF(0) to CF(1) or is implicated in proton conduction. In Desulfovibrio desulfuricans (strain ATCC 27774 / DSM 6949 / MB), this protein is ATP synthase subunit delta.